Reading from the N-terminus, the 299-residue chain is UDP-N-acetylenolpyruvoylglucosamine reductase (299 aa).

Residues 27 to 192 form the FAD-binding PCMH-type domain; the sequence is KSGGAADWLF…VGATFRGRPG (166 aa). Arg172 is a catalytic residue. The segment at 206 to 225 is disordered; sequence ASREASQPLRSRTGGSTFKN. The segment covering 208 to 224 has biased composition (polar residues); the sequence is REASQPLRSRTGGSTFK. Ser221 (proton donor) is an active-site residue. Residue Glu291 is part of the active site.

Belongs to the MurB family. Requires FAD as cofactor.

Its subcellular location is the cytoplasm. The enzyme catalyses UDP-N-acetyl-alpha-D-muramate + NADP(+) = UDP-N-acetyl-3-O-(1-carboxyvinyl)-alpha-D-glucosamine + NADPH + H(+). Its pathway is cell wall biogenesis; peptidoglycan biosynthesis. Cell wall formation. The polypeptide is UDP-N-acetylenolpyruvoylglucosamine reductase (Sphingopyxis alaskensis (strain DSM 13593 / LMG 18877 / RB2256) (Sphingomonas alaskensis)).